A 398-amino-acid chain; its full sequence is Thyrotropin-releasing hormone receptor (398 aa).

The Extracellular portion of the chain corresponds to 1-28 (MENETVSELNQTQLQPRAVVALEYQVVT). N-linked (GlcNAc...) asparagine glycosylation is found at asparagine 3 and asparagine 10. The helical transmembrane segment at 29 to 51 (ILLVLIICGLGIVGNIMVVLVVM) threads the bilayer. Residues 52 to 61 (RTKHMRTPTN) are Cytoplasmic-facing. The helical transmembrane segment at 62–83 (CYLVSLAVADLMVLVAAGLPNI) threads the bilayer. The Extracellular portion of the chain corresponds to 84–99 (TDSIYGSWVYGYVGCL). Cysteines 98 and 179 form a disulfide. A helical membrane pass occupies residues 100–121 (CITYLQYLGINASSCSITAFTI). Residues 122-144 (ERYIAICHPIKAQFLCTFSRAKK) are Cytoplasmic-facing. A helical membrane pass occupies residues 145-168 (IIIFVWAFTSLYCMLWFFLLDLNI). Residues 169 to 193 (STYKDAIVISCGYKISRNYYSPIYL) lie on the Extracellular side of the membrane. The helical transmembrane segment at 194–215 (MDFGVFYVVPMILATVLYGFIA) threads the bilayer. Over 216 to 266 (RILFLNPIPSDPKENSKTWKNDSTHQNTNLNVNTSNRCFNSTVSSRKQVTK) the chain is Cytoplasmic. A helical membrane pass occupies residues 267-288 (MLAVVVILFALLWMPYRTLVVV). The Extracellular segment spans residues 289-296 (NSFLSSPF). Residues 297-319 (QENWFLLFCRICIYLNSAINPVI) traverse the membrane as a helical segment. Topologically, residues 320–398 (YNLMSQKFRA…LASEVSFSQS (79 aa)) are cytoplasmic.

This sequence belongs to the G-protein coupled receptor 1 family.

The protein localises to the cell membrane. In terms of biological role, receptor for thyrotropin-releasing hormone (TRH). Upon ligand binding, this G-protein-coupled receptor triggers activation of the phosphatidylinositol (IP3)-calcium-protein kinase C (PKC) pathway. The polypeptide is Thyrotropin-releasing hormone receptor (TRHR) (Homo sapiens (Human)).